The chain runs to 107 residues: UPF0145 protein TT_C0892 (107 aa).

This sequence belongs to the UPF0145 family.

The protein is UPF0145 protein TT_C0892 of Thermus thermophilus (strain ATCC BAA-163 / DSM 7039 / HB27).